The sequence spans 32 residues: Enolase (32 aa).

Belongs to the enolase family. Homodimer. Requires Mg(2+) as cofactor.

The protein localises to the cytoplasm. The enzyme catalyses (2R)-2-phosphoglycerate = phosphoenolpyruvate + H2O. The protein operates within carbohydrate degradation; glycolysis; pyruvate from D-glyceraldehyde 3-phosphate: step 4/5. This Imperata cylindrica (Cogon grass) protein is Enolase.